A 202-amino-acid chain; its full sequence is HTH-type transcriptional regulator BetI 1 (202 aa).

Residues 8 to 68 (PIRRRQLIQA…SAMRQILWDL (61 aa)) form the HTH tetR-type domain. Positions 31–50 (TIARIAKRAGVSAGIISHYF) form a DNA-binding region, H-T-H motif.

It functions in the pathway amine and polyamine biosynthesis; betaine biosynthesis via choline pathway [regulation]. Functionally, repressor involved in the biosynthesis of the osmoprotectant glycine betaine. It represses transcription of the choline transporter BetT and the genes of BetAB involved in the synthesis of glycine betaine. This chain is HTH-type transcriptional regulator BetI 1, found in Chromohalobacter salexigens (strain ATCC BAA-138 / DSM 3043 / CIP 106854 / NCIMB 13768 / 1H11).